Consider the following 76-residue polypeptide: Liver-expressed antimicrobial peptide 2 (76 aa).

An N-terminal signal peptide occupies residues 1–22 (MLQLKLFAVLLTCLLLLGQVNS). The propeptide occupies 23-36 (SPVPEVSSAKRSRR). Cystine bridges form between Cys53/Cys64 and Cys59/Cys69.

Belongs to the LEAP2 family.

The protein resides in the secreted. Has an antimicrobial activity. This is Liver-expressed antimicrobial peptide 2 (Leap2) from Mus musculus (Mouse).